The chain runs to 1244 residues: ATP-dependent helicase/nuclease subunit A (1244 aa).

The 474-residue stretch at 4-477 folds into the UvrD-like helicase ATP-binding domain; that stretch reads TKWTEEQLSA…IQLYKNFRSR (474 aa). ATP is bound at residue 25 to 32; sequence AAAGSGKT. One can recognise a UvrD-like helicase C-terminal domain in the interval 517–811; the sequence is KNVDDIIGGP…RIMSIHKSKG (295 aa).

This sequence belongs to the helicase family. AddA subfamily. In terms of assembly, heterodimer of AddA and AddB/RexB. Mg(2+) is required as a cofactor.

It carries out the reaction Couples ATP hydrolysis with the unwinding of duplex DNA by translocating in the 3'-5' direction.. The enzyme catalyses ATP + H2O = ADP + phosphate + H(+). Functionally, the heterodimer acts as both an ATP-dependent DNA helicase and an ATP-dependent, dual-direction single-stranded exonuclease. Recognizes the chi site generating a DNA molecule suitable for the initiation of homologous recombination. The AddA nuclease domain is required for chi fragment generation; this subunit has the helicase and 3' -&gt; 5' nuclease activities. The chain is ATP-dependent helicase/nuclease subunit A from Clostridium botulinum (strain Alaska E43 / Type E3).